An 86-amino-acid polypeptide reads, in one-letter code: Actinorhodin polyketide synthase acyl carrier protein (86 aa).

Residues 4 to 82 form the Carrier domain; it reads LLTTDDLRRA…ELLDLINGAL (79 aa). Serine 42 is modified (O-(pantetheine 4'-phosphoryl)serine).

Post-translationally, 4'-phosphopantetheine is transferred from CoA to a specific serine of the apo-ACP-like protein.

The protein operates within antibiotic biosynthesis; actinorhodin biosynthesis. Functionally, acyl carrier protein. This Streptomyces coelicolor (strain ATCC BAA-471 / A3(2) / M145) protein is Actinorhodin polyketide synthase acyl carrier protein.